The following is a 177-amino-acid chain: Large ribosomal subunit protein uL10 (177 aa).

This sequence belongs to the universal ribosomal protein uL10 family. Part of the ribosomal stalk of the 50S ribosomal subunit. The N-terminus interacts with L11 and the large rRNA to form the base of the stalk. The C-terminus forms an elongated spine to which L12 dimers bind in a sequential fashion forming a multimeric L10(L12)X complex.

Its function is as follows. Forms part of the ribosomal stalk, playing a central role in the interaction of the ribosome with GTP-bound translation factors. The polypeptide is Large ribosomal subunit protein uL10 (Xanthomonas oryzae pv. oryzae (strain MAFF 311018)).